The sequence spans 603 residues: Myotubularin (603 aa).

Residues 1–13 are compositionally biased toward polar residues; it reads MASAPTSKYNSHS. Positions 1-32 are disordered; it reads MASAPTSKYNSHSLENESIKRTSRDGVNRDVG. 2 positions are modified to phosphoserine: serine 13 and serine 18. Positions 14 to 32 are enriched in basic and acidic residues; the sequence is LENESIKRTSRDGVNRDVG. The GRAM domain occupies 29-97; sequence RDVGETLPRL…GVISRIEKMG (69 aa). The 376-residue stretch at 163-538 folds into the Myotubularin phosphatase domain; the sequence is GWTVYNPVEE…RHLELWVNYY (376 aa). Asparagine 288, asparagine 313, and isoleucine 314 together coordinate a 1,2-diacyl-sn-glycero-3-phospho-(1D-myo-inositol-3,5-bisphosphate). A 1,2-diacyl-sn-glycero-3-phospho-(1D-myo-inositol-3-phosphate) contacts are provided by asparagine 288, asparagine 313, and isoleucine 314. Cysteine 375 (phosphocysteine intermediate) is an active-site residue. A 1,2-diacyl-sn-glycero-3-phospho-(1D-myo-inositol-3,5-bisphosphate) is bound by residues serine 376, aspartate 377, glycine 378, tryptophan 379, aspartate 380, arginine 381, lysine 417, and arginine 421. Positions 376, 377, 378, 379, 380, and 381 each coordinate a 1,2-diacyl-sn-glycero-3-phospho-(1D-myo-inositol-3-phosphate). Position 421 (arginine 421) interacts with a 1,2-diacyl-sn-glycero-3-phospho-(1D-myo-inositol-3-phosphate). Residue threonine 495 is modified to Phosphothreonine. The disordered stretch occupies residues 580–603; the sequence is AKLSDPSASPSSPSQMMPHVQTHF. The segment covering 583–593 has biased composition (low complexity); the sequence is SDPSASPSSPS. Serine 588 is subject to Phosphoserine.

The protein belongs to the protein-tyrosine phosphatase family. Non-receptor class myotubularin subfamily. As to quaternary structure, heterodimer with MTMR12. Interacts with KMT2A/MLL1 (via SET domain). Interacts with DES in skeletal muscle but not in cardiac muscle. Interacts with SPEG.

It localises to the cytoplasm. The protein localises to the cell membrane. It is found in the cell projection. Its subcellular location is the filopodium. The protein resides in the ruffle. It localises to the late endosome. The protein localises to the myofibril. It is found in the sarcomere. The catalysed reaction is a 1,2-diacyl-sn-glycero-3-phospho-(1D-myo-inositol-3-phosphate) + H2O = a 1,2-diacyl-sn-glycero-3-phospho-(1D-myo-inositol) + phosphate. It catalyses the reaction a 1,2-diacyl-sn-glycero-3-phospho-(1D-myo-inositol-3,5-bisphosphate) + H2O = a 1,2-diacyl-sn-glycero-3-phospho-(1D-myo-inositol-5-phosphate) + phosphate. The enzyme catalyses 1,2-dioctanoyl-sn-glycero-3-phospho-(1-D-myo-inositol-3-phosphate) + H2O = 1,2-dioctanoyl-sn-glycero-3-phospho-(1D-myo-inositol) + phosphate. It carries out the reaction 1,2-dioctanoyl-sn-glycero-3-phospho-(1D-myo-inositol-3,5-bisphosphate) + H2O = 1,2-dioctanoyl-sn-glycero-3-phospho-(1D-myo-inositol-5-phosphate) + phosphate. The catalysed reaction is 1,2-dihexadecanoyl-sn-glycero-3-phospho-(1D-myo-inositol-3,5-phosphate) + H2O = 1,2-dihexadecanoyl-sn-glycero-3-phospho-(1D-myo-inositol-5-phosphate) + phosphate. Allosterically activated by phosphatidylinositol 5-phosphate (PI5P). Lipid phosphatase which dephosphorylates phosphatidylinositol 3-monophosphate (PI3P) and phosphatidylinositol 3,5-bisphosphate (PI(3,5)P2). Has also been shown to dephosphorylate phosphotyrosine- and phosphoserine-containing peptides. Negatively regulates EGFR degradation through regulation of EGFR trafficking from the late endosome to the lysosome. Plays a role in vacuolar formation and morphology. Regulates desmin intermediate filament assembly and architecture. Plays a role in mitochondrial morphology and positioning. Required for skeletal muscle maintenance but not for myogenesis. In skeletal muscles, stabilizes MTMR12 protein levels. This is Myotubularin from Bos taurus (Bovine).